We begin with the raw amino-acid sequence, 505 residues long: Probable glycine dehydrogenase (decarboxylating) subunit 2 (505 aa).

Residue K274 is modified to N6-(pyridoxal phosphate)lysine.

The protein belongs to the GcvP family. C-terminal subunit subfamily. As to quaternary structure, the glycine cleavage system is composed of four proteins: P, T, L and H. In this organism, the P 'protein' is a heterodimer of two subunits. It depends on pyridoxal 5'-phosphate as a cofactor.

It carries out the reaction N(6)-[(R)-lipoyl]-L-lysyl-[glycine-cleavage complex H protein] + glycine + H(+) = N(6)-[(R)-S(8)-aminomethyldihydrolipoyl]-L-lysyl-[glycine-cleavage complex H protein] + CO2. Functionally, the glycine cleavage system catalyzes the degradation of glycine. The P protein binds the alpha-amino group of glycine through its pyridoxal phosphate cofactor; CO(2) is released and the remaining methylamine moiety is then transferred to the lipoamide cofactor of the H protein. This chain is Probable glycine dehydrogenase (decarboxylating) subunit 2, found in Sulfurisphaera tokodaii (strain DSM 16993 / JCM 10545 / NBRC 100140 / 7) (Sulfolobus tokodaii).